A 196-amino-acid polypeptide reads, in one-letter code: Urease accessory protein UreE (196 aa).

The disordered stretch occupies residues 150–196; that stretch reads RGAYSGGHDHGHAHAHSHAEAHSHAHGESHSHSHSHSHDDHHHHDHD. The span at 156–196 shows a compositional bias: basic and acidic residues; the sequence is GHDHGHAHAHSHAEAHSHAHGESHSHSHSHSHDDHHHHDHD.

The protein belongs to the UreE family.

It is found in the cytoplasm. In terms of biological role, involved in urease metallocenter assembly. Binds nickel. Probably functions as a nickel donor during metallocenter assembly. This is Urease accessory protein UreE from Mesorhizobium japonicum (strain LMG 29417 / CECT 9101 / MAFF 303099) (Mesorhizobium loti (strain MAFF 303099)).